Here is a 387-residue protein sequence, read N- to C-terminus: uncharacterized protein (387 aa).

The chain crosses the membrane as a helical span at residues 5-25 (FVLFSFPFLLLSSMLIFYQTT).

Belongs to the LicD transferase family.

The protein resides in the membrane. This is an uncharacterized protein from Caenorhabditis elegans.